A 694-amino-acid polypeptide reads, in one-letter code: E3 ubiquitin-protein ligase RNF169 (694 aa).

Composition is skewed to low complexity over residues 1-20 (MAAA…AALS) and 33-46 (AAKA…SSPA). The disordered stretch occupies residues 1–46 (MAAAGPSTRASSAAAAAALSRRGRRGRCDEMAAAKAGAPGPASSPA). Ser-12 bears the Phosphoserine mark. Residues 61–97 (CTGCLETPGEVAALPCSHSRCRGCASRAAGPGCRRCR) form an RING-type zinc finger. Residues 100–153 (GSGWARRRARDDGQAAAELMGERARRGQPEPCRPRRDGGAAASGPRPEPEPLAE) form a disordered region. Residues 119 to 137 (MGERARRGQPEPCRPRRDG) are compositionally biased toward basic and acidic residues. A UMI motif motif is present at residues 192 to 200 (DDQIHKLLQ). Phosphoserine is present on residues Ser-234 and Ser-236. Residue Lys-273 forms a Glycyl lysine isopeptide (Lys-Gly) (interchain with G-Cter in SUMO2) linkage. A Phosphoserine modification is found at Ser-326. Residue Lys-349 forms a Glycyl lysine isopeptide (Lys-Gly) (interchain with G-Cter in SUMO2) linkage. Residues Ser-390 and Ser-396 each carry the phosphoserine modification. Thr-397 carries the post-translational modification Phosphothreonine. The residue at position 472 (Ser-472) is a Phosphoserine. Lys-498 participates in a covalent cross-link: Glycyl lysine isopeptide (Lys-Gly) (interchain with G-Cter in SUMO2). Residues 515–537 (TCHSSEHGGASSGPSLEREQCEE) are disordered. Residue Thr-541 is modified to Phosphothreonine. Ser-630 is modified (phosphoserine). An MIU motif motif is present at residues 651–668 (QEEEDQQLALQSHRMFDS). The LR motif motif lies at 675-687 (RRKGSVDQYLLRS). A Phosphoserine modification is found at Ser-679.

It belongs to the RNF169 family. Interacts with DYRK1B. Phosphorylated by DYRK1A; phosphorylation increases RNF169 ability to block accumulation of TP53BP1 at the DSB sites.

It localises to the chromosome. The protein resides in the nucleus. Its subcellular location is the nucleoplasm. It carries out the reaction S-ubiquitinyl-[E2 ubiquitin-conjugating enzyme]-L-cysteine + [acceptor protein]-L-lysine = [E2 ubiquitin-conjugating enzyme]-L-cysteine + N(6)-ubiquitinyl-[acceptor protein]-L-lysine.. Its pathway is protein modification; protein ubiquitination. Probable E3 ubiquitin-protein ligase that acts as a regulator of double-strand breaks (DSBs) repair following DNA damage. Functions in a non-canonical fashion to harness RNF168-mediated protein recruitment to DSB-containing chromatin, thereby contributing to regulation of DSB repair pathway utilization. Once recruited to DSB repair sites by recognizing and binding ubiquitin catalyzed by RNF168, competes with TP53BP1 and BRCA1 for association with RNF168-modified chromatin, thereby favouring homologous recombination repair (HRR) and single-strand annealing (SSA) instead of non-homologous end joining (NHEJ) mediated by TP53BP1. E3 ubiquitin-protein ligase activity is not required for regulation of DSBs repair. This Mus musculus (Mouse) protein is E3 ubiquitin-protein ligase RNF169 (Rnf169).